The chain runs to 395 residues: Peptide-N(4)-(N-acetyl-beta-glucosaminyl)asparagine amidase (395 aa).

Zn(2+) contacts are provided by C131, C134, C172, and C175. C198 (nucleophile) is an active-site residue. Residues H232 and D249 contribute to the active site. Residue E252 coordinates substrate. The segment at 363–395 is disordered; the sequence is PELTKTTPSTDLPSGRQSGSTEWTKSRGENGES. A compositionally biased stretch (polar residues) spans 366-385; that stretch reads TKTTPSTDLPSGRQSGSTEW. Over residues 386–395 the composition is skewed to basic and acidic residues; the sequence is TKSRGENGES.

This sequence belongs to the transglutaminase-like superfamily. PNGase family. The cofactor is Zn(2+).

Its subcellular location is the cytoplasm. It carries out the reaction Hydrolysis of an N(4)-(acetyl-beta-D-glucosaminyl)asparagine residue in which the glucosamine residue may be further glycosylated, to yield a (substituted) N-acetyl-beta-D-glucosaminylamine and a peptide containing an aspartate residue.. Functionally, specifically deglycosylates the denatured form of N-linked glycoproteins in the cytoplasm and assists their proteasome-mediated degradation. Cleaves the beta-aspartyl-glucosamine (GlcNAc) of the glycan and the amide side chain of Asn, converting Asn to Asp. Prefers proteins containing high-mannose over those bearing complex type oligosaccharides. Can recognize misfolded proteins in the endoplasmic reticulum that are exported to the cytosol to be destroyed and deglycosylate them, while it has no activity toward native proteins. Deglycosylation is a prerequisite for subsequent proteasome-mediated degradation of some, but not all, misfolded glycoproteins. The sequence is that of Peptide-N(4)-(N-acetyl-beta-glucosaminyl)asparagine amidase (PNG1) from Candida albicans (strain SC5314 / ATCC MYA-2876) (Yeast).